A 62-amino-acid polypeptide reads, in one-letter code: Large ribosomal subunit protein bL28 (62 aa).

Belongs to the bacterial ribosomal protein bL28 family.

The polypeptide is Large ribosomal subunit protein bL28 (Acholeplasma laidlawii (strain PG-8A)).